Reading from the N-terminus, the 485-residue chain is MAKAIRVRYAPSPTGLLHIGNARTALFNYLYARHHGGTFIIRIEDTDRKRHVEDGERSQLENLRWLGMDWDESPETHENYRQSERLELYQKYIDQLLAEGKAYKSYVTEEELAAERERQEAAGETPRYINEYLGMSEEEKAAYIAEREAAGIIPTVRLSVNESGIYKWHDIVKGDIEFEGGNIGGDWVIQKKDGYPTYNFAVVIDDHDMQISHVIRGDDHIANTPKQLMVYEALGWEAPEFGHMTLIINSETGKKLSKRDTNTLQFIEDYRKKGYLPEAVFNFIALLGWNPGGEDEIFSREELIKLFDENRLSKSPAAFDQKKLDWMSNEYIKNADFERIFALAKPYLEEAGRLTDKAEKLVELYKPQMKSVDEIVPLTDLFFSDFPELTEAEREVMAGETVPVVLEAFKAKLEAMTDEEFVTENIFPQIKAVQKETGIKGKNLFMPIRIAVSGEMHGPELPDTIYLLGREKSIQHIENMLNQIQ.

The 'HIGH' region motif lies at 11-21 (PSPTGLLHIGN). The 'KMSKS' region signature appears at 255-259 (KLSKR). Lysine 258 is a binding site for ATP.

It belongs to the class-I aminoacyl-tRNA synthetase family. Glutamate--tRNA ligase type 1 subfamily. In terms of assembly, monomer.

Its subcellular location is the cytoplasm. It catalyses the reaction tRNA(Glu) + L-glutamate + ATP = L-glutamyl-tRNA(Glu) + AMP + diphosphate. Catalyzes the attachment of glutamate to tRNA(Glu) in a two-step reaction: glutamate is first activated by ATP to form Glu-AMP and then transferred to the acceptor end of tRNA(Glu). This is Glutamate--tRNA ligase from Streptococcus gordonii (strain Challis / ATCC 35105 / BCRC 15272 / CH1 / DL1 / V288).